A 215-amino-acid polypeptide reads, in one-letter code: Protein Syd (215 aa).

Belongs to the Syd family.

The protein localises to the cell inner membrane. Its function is as follows. Interacts with the SecY protein in vivo. May bind preferentially to an uncomplexed state of SecY, thus functioning either as a chelating agent for excess SecY in the cell or as a regulatory factor that negatively controls the translocase function. This chain is Protein Syd, found in Shewanella piezotolerans (strain WP3 / JCM 13877).